A 402-amino-acid polypeptide reads, in one-letter code: Phytoene synthase 2, chloroplastic (402 aa).

A chloroplast-targeting transit peptide spans 1–54 (MAAGSSAVWAAQHPACSGGKFHHLSPSHSHCRPRRALQTPPALPARRSGASPPR). Over residues 20–35 (KFHHLSPSHSHCRPRR) the composition is skewed to basic residues. The disordered stretch occupies residues 20–54 (KFHHLSPSHSHCRPRRALQTPPALPARRSGASPPR). Residues 44 to 54 (PARRSGASPPR) are compositionally biased toward low complexity.

This sequence belongs to the phytoene/squalene synthase family. In terms of tissue distribution, expressed in leaves and endosperm.

The protein localises to the plastid. The protein resides in the chloroplast. It localises to the plastoglobule. It catalyses the reaction 2 (2E,6E,10E)-geranylgeranyl diphosphate = 15-cis-phytoene + 2 diphosphate. In terms of biological role, catalyzes the conversion of geranylgeranyl diphosphate to phytoene. Mediates the first committed step in carotenoid biosynthesis. This chain is Phytoene synthase 2, chloroplastic, found in Zea mays (Maize).